Consider the following 511-residue polypeptide: U3 snoRNP-associated protein-like YAOH (511 aa).

Over residues 1–18 (MAPRPRKRVSRPKPRATS) the composition is skewed to basic residues. A disordered region spans residues 1-117 (MAPRPRKRVS…EDEDEGEEAG (117 aa)). Composition is skewed to acidic residues over residues 44 to 53 (EDIESEDSDL) and 66 to 80 (DDGEEEEEEEEEQET). Basic and acidic residues predominate over residues 81 to 105 (AGEKKMRIAKELLKKVTDAARRRRE). WD repeat units lie at residues 158 to 197 (KHRQPVTAVVLSKDSDKGFSASKDGVIVHWDVETGKSEKY), 217 to 256 (KRSKQVLALAVSADGRYLASGGLDRHIHLWDVRSREHIQA), 259 to 298 (GHRGAISCLSFGPDSSELFSGSFDRKIMQWNAEDRTYMNC), 301 to 339 (GHQNEVLTMDALSKDRLLTVARDRTMHLWKIPEESQLLF), 342 to 380 (PATASLECCCFIDDKEFLTGSDDGSVELWSIMRKKPTHI), 412 to 451 (SAQSWVSAIAARRGSDLAASGAANGSVRLWAIEPDSKGIR), and 457 to 497 (RLDG…QNGV).

The protein belongs to the WD repeat RRP9 family.

The protein localises to the nucleus. It localises to the nucleolus. Functionally, component of a nucleolar small nuclear ribonucleoprotein particle (snoRNP) thought to participate in the processing and modification of pre-ribosomal RNA. Essential for embryogenesis. In Oryza sativa subsp. japonica (Rice), this protein is U3 snoRNP-associated protein-like YAOH.